We begin with the raw amino-acid sequence, 117 residues long: UPF0344 protein GTNG_0604 (117 aa).

The next 4 membrane-spanning stretches (helical) occupy residues Met-1–Ser-21, Leu-39–Ser-59, Leu-61–Val-81, and Val-97–Phe-117.

The protein belongs to the UPF0344 family.

The protein localises to the cell membrane. This Geobacillus thermodenitrificans (strain NG80-2) protein is UPF0344 protein GTNG_0604.